The primary structure comprises 81 residues: Antimicrobial peptide D2 (81 aa).

Residues 1 to 31 form the signal peptide; the sequence is MAKTVLGIHVTFLTLLFAVILLNDVMYTPVE. Disulfide bonds link Cys-34–Cys-81, Cys-45–Cys-66, Cys-51–Cys-75, and Cys-55–Cys-77.

In terms of biological role, antimicrobial peptide probably active against fungi like B.sorokiniana, F.oxysporum, F.graminearum, F.avenaceum, B.cinerea, P.beta, P.infestans and P.debaryanum. This is Antimicrobial peptide D2 from Stellaria media (Common chickweed).